The primary structure comprises 723 residues: Dipeptidyl aminopeptidase BI (723 aa).

The first 23 residues, 1–23 (MKPTSLLLAATVLMSTPITSALA), serve as a signal peptide directing secretion. Residues Ser-574, Asp-659, and His-694 each act as charge relay system in the active site.

The protein belongs to the peptidase S9A family. As to quaternary structure, monomer.

Its activity is regulated as follows. Nearly completely inhibited by 0.5 mM ZnCl(2), 0.1 mM N-tosyl-L-lysyl chloromethyl ketone (TLCK) and 0.1 mM leupeptin. Strongly inhibited by 0.5 mM CoCl(2) and 0.1 mM chymostatin. Activity is hardly affected by general serine protease inhibitors phenylmethanesulfonyl fluoride (PMSF), diisopropyl fluorophosphate (DFP) and N-tosyl-L-phenyl-alanyl chloromethyl ketone (TPCK) or by aspartyl protease inhibitor pepstatin A or by CaCl(2) and EDTA. Cysteine protease inhibitors, such as N-ethylmaleimide (NEM), iodoacetic acid and L-trans-epoxysuccinyl-leucylamido(4-guanido)butane (E-64) have no effect on activity. Sequentially removes dipeptide units (NH3-P2-P1-) from the amino termini of peptides and proteins. Is able to catalyze the removal of Asp-Arg from the amino termini of angiotensins I and II. Has slight endopeptidase activity on N-terminally blocked peptide derivatives which contain arginine residues at the P1 position. Does not hydrolyze Ala-Ala-Ala and Ala-Ala-Ala-Ala substrates or insulin beta chain. The polypeptide is Dipeptidyl aminopeptidase BI (Pseudoxanthomonas mexicana).